Reading from the N-terminus, the 595-residue chain is Beta-(1--&gt;2)glucan export ATP-binding/permease protein NdvA (595 aa).

Helical transmembrane passes span 21–41 (FLLI…EPIL), 56–76 (LVTL…YVLV), 129–149 (IWLE…VLVP), 158–178 (LSIV…LVMQ), and 252–272 (ISIV…QLSV). The ABC transmembrane type-1 domain maps to 21–301 (FLLICTANIT…ISGFINLAVS (281 aa)). Positions 335 to 569 (IQFHHVTYEF…DGHFYKLLKA (235 aa)) constitute an ABC transporter domain. 368-375 (GPTGAGKT) is a binding site for ATP.

Belongs to the ABC transporter superfamily. Beta-(1--&gt;2)glucan exporter (TC 3.A.1.108.1) family. Homodimer.

Its subcellular location is the cell inner membrane. The catalysed reaction is [(1-&gt;2)-beta-D-glucosyl](n)(in) + ATP + H2O = [(1-&gt;2)-beta-D-glucosyl](n)(out) + ADP + phosphate + H(+). Its function is as follows. Involved in beta-(1--&gt;2)glucan export. Transmembrane domains (TMD) form a pore in the inner membrane and the ATP-binding domain (NBD) is responsible for energy generation. The polypeptide is Beta-(1--&gt;2)glucan export ATP-binding/permease protein NdvA (Bartonella bacilliformis (strain ATCC 35685 / KC583 / Herrer 020/F12,63)).